Consider the following 182-residue polypeptide: Large ribosomal subunit protein uL5 (182 aa).

Belongs to the universal ribosomal protein uL5 family. As to quaternary structure, part of the 50S ribosomal subunit; part of the 5S rRNA/L5/L18/L25 subcomplex. Contacts the 5S rRNA and the P site tRNA. Forms a bridge to the 30S subunit in the 70S ribosome.

Its function is as follows. This is one of the proteins that bind and probably mediate the attachment of the 5S RNA into the large ribosomal subunit, where it forms part of the central protuberance. In the 70S ribosome it contacts protein S13 of the 30S subunit (bridge B1b), connecting the 2 subunits; this bridge is implicated in subunit movement. Contacts the P site tRNA; the 5S rRNA and some of its associated proteins might help stabilize positioning of ribosome-bound tRNAs. The sequence is that of Large ribosomal subunit protein uL5 from Coxiella burnetii (strain CbuG_Q212) (Coxiella burnetii (strain Q212)).